A 281-amino-acid chain; its full sequence is Lipoyl synthase (281 aa).

The [4Fe-4S] cluster site is built by Cys-37, Cys-42, Cys-48, Cys-63, Cys-67, Cys-70, and Ser-274. Residues 49–263 form the Radical SAM core domain; the sequence is WSRGTATFMI…RQQAVNKGFK (215 aa).

Belongs to the radical SAM superfamily. Lipoyl synthase family. [4Fe-4S] cluster is required as a cofactor.

The protein resides in the cytoplasm. It catalyses the reaction [[Fe-S] cluster scaffold protein carrying a second [4Fe-4S](2+) cluster] + N(6)-octanoyl-L-lysyl-[protein] + 2 oxidized [2Fe-2S]-[ferredoxin] + 2 S-adenosyl-L-methionine + 4 H(+) = [[Fe-S] cluster scaffold protein] + N(6)-[(R)-dihydrolipoyl]-L-lysyl-[protein] + 4 Fe(3+) + 2 hydrogen sulfide + 2 5'-deoxyadenosine + 2 L-methionine + 2 reduced [2Fe-2S]-[ferredoxin]. It participates in protein modification; protein lipoylation via endogenous pathway; protein N(6)-(lipoyl)lysine from octanoyl-[acyl-carrier-protein]: step 2/2. Functionally, catalyzes the radical-mediated insertion of two sulfur atoms into the C-6 and C-8 positions of the octanoyl moiety bound to the lipoyl domains of lipoate-dependent enzymes, thereby converting the octanoylated domains into lipoylated derivatives. The polypeptide is Lipoyl synthase (Parabacteroides distasonis (strain ATCC 8503 / DSM 20701 / CIP 104284 / JCM 5825 / NCTC 11152)).